Here is a 199-residue protein sequence, read N- to C-terminus: Recombination protein RecR (199 aa).

The C4-type zinc-finger motif lies at 57–72 (CSICGNITDKDPCYVC). Positions 80 to 176 (TIVCVVQDSR…RVTRIAHGLP (97 aa)) constitute a Toprim domain.

It belongs to the RecR family.

May play a role in DNA repair. It seems to be involved in an RecBC-independent recombinational process of DNA repair. It may act with RecF and RecO. This chain is Recombination protein RecR, found in Exiguobacterium sibiricum (strain DSM 17290 / CCUG 55495 / CIP 109462 / JCM 13490 / 255-15).